Consider the following 334-residue polypeptide: N-acetyl-gamma-glutamyl-phosphate reductase (334 aa).

The active site involves Cys-154.

It belongs to the NAGSA dehydrogenase family. Type 1 subfamily.

The protein localises to the cytoplasm. The catalysed reaction is N-acetyl-L-glutamate 5-semialdehyde + phosphate + NADP(+) = N-acetyl-L-glutamyl 5-phosphate + NADPH + H(+). Its pathway is amino-acid biosynthesis; L-arginine biosynthesis; N(2)-acetyl-L-ornithine from L-glutamate: step 3/4. Functionally, catalyzes the NADPH-dependent reduction of N-acetyl-5-glutamyl phosphate to yield N-acetyl-L-glutamate 5-semialdehyde. The polypeptide is N-acetyl-gamma-glutamyl-phosphate reductase (Escherichia coli O6:H1 (strain CFT073 / ATCC 700928 / UPEC)).